The sequence spans 547 residues: Chaperonin GroEL 1 (547 aa).

Residues 30 to 33 (TLGP), lysine 51, 87 to 91 (DGTTT), glycine 415, and aspartate 496 each bind ATP.

It belongs to the chaperonin (HSP60) family. As to quaternary structure, forms a cylinder of 14 subunits composed of two heptameric rings stacked back-to-back. Interacts with the co-chaperonin GroES.

The protein resides in the cytoplasm. It catalyses the reaction ATP + H2O + a folded polypeptide = ADP + phosphate + an unfolded polypeptide.. In terms of biological role, together with its co-chaperonin GroES, plays an essential role in assisting protein folding. The GroEL-GroES system forms a nano-cage that allows encapsulation of the non-native substrate proteins and provides a physical environment optimized to promote and accelerate protein folding. In Bradyrhizobium sp. (strain BTAi1 / ATCC BAA-1182), this protein is Chaperonin GroEL 1.